The chain runs to 292 residues: Xanthine dehydrogenase FAD-binding subunit (292 aa).

In terms of domain architecture, FAD-binding PCMH-type spans 1–176 (MFDFASYHRA…VAFHFPPQPK (176 aa)). Residues 27–34 (KLLAGGTD), 109–113 (ATYGG), I165, and F184 each bind FAD.

Heterotrimer of XdhA, XdhB and XdhC. FAD is required as a cofactor.

It catalyses the reaction xanthine + NAD(+) + H2O = urate + NADH + H(+). It carries out the reaction hypoxanthine + NAD(+) + H2O = xanthine + NADH + H(+). Its pathway is purine metabolism; hypoxanthine degradation; urate from hypoxanthine: step 1/2. It participates in purine metabolism; hypoxanthine degradation; urate from hypoxanthine: step 2/2. In terms of biological role, presumed to be a dehydrogenase, but possibly an oxidase. Participates in limited purine salvage (requires aspartate) but does not support aerobic growth on purines as the sole carbon source (purine catabolism). The chain is Xanthine dehydrogenase FAD-binding subunit (xdhB) from Escherichia coli O157:H7.